The sequence spans 135 residues: Type 3 secretion system stator protein (135 aa).

Belongs to the SctL stator family. As to quaternary structure, the core secretion machinery of the T3SS is composed of approximately 20 different proteins, including cytoplasmic components, a base, an export apparatus and a needle. This subunit is part of the cytosolic complex.

It localises to the cytoplasm. Its function is as follows. Component of the type III secretion system (T3SS), also called injectisome, which is used to inject bacterial effector proteins into eukaryotic host cells. Acts as a regulator of the HrcN/SctN ATPase activity. The protein is Type 3 secretion system stator protein of Rhizobium fredii (Sinorhizobium fredii).